A 408-amino-acid polypeptide reads, in one-letter code: Tripartite motif-containing protein 59 (408 aa).

The segment at 10–60 (CSICYSLFEDPRVLPCSHTFCRSCLEGVIQLSSNFSIWRPLRVPLKCPNCR) adopts an RING-type zinc-finger fold. The B box-type zinc finger occupies 92–134 (SDVATCSEHYRQPLNVYCLLDKKLVCGHCLTIGKHNGHPIDDL). Cysteine 97, histidine 100, cysteine 120, and histidine 126 together coordinate Zn(2+). Residues 163 to 247 (LIEKLKEQKA…LNTSIQKEES (85 aa)) adopt a coiled-coil conformation. Residues 333 to 353 (ANPLSVTFIFTVIIAIAVLSF) traverse the membrane as a helical segment.

It belongs to the TRIM/RBCC family. Interacts with ECSIT.

It is found in the endoplasmic reticulum membrane. Its function is as follows. May serve as a multifunctional regulator for innate immune signaling pathways. In Gallus gallus (Chicken), this protein is Tripartite motif-containing protein 59 (TRIM59).